A 126-amino-acid chain; its full sequence is Large ribosomal subunit protein bL12 (126 aa).

It belongs to the bacterial ribosomal protein bL12 family. In terms of assembly, homodimer. Part of the ribosomal stalk of the 50S ribosomal subunit. Forms a multimeric L10(L12)X complex, where L10 forms an elongated spine to which 2 to 4 L12 dimers bind in a sequential fashion. Binds GTP-bound translation factors.

In terms of biological role, forms part of the ribosomal stalk which helps the ribosome interact with GTP-bound translation factors. Is thus essential for accurate translation. The polypeptide is Large ribosomal subunit protein bL12 (Chlorobaculum parvum (strain DSM 263 / NCIMB 8327) (Chlorobium vibrioforme subsp. thiosulfatophilum)).